The chain runs to 144 residues: D-aminoacyl-tRNA deacylase (144 aa).

A Gly-cisPro motif, important for rejection of L-amino acids motif is present at residues 136–137 (GP).

Belongs to the DTD family. As to quaternary structure, homodimer.

It localises to the cytoplasm. It carries out the reaction glycyl-tRNA(Ala) + H2O = tRNA(Ala) + glycine + H(+). The catalysed reaction is a D-aminoacyl-tRNA + H2O = a tRNA + a D-alpha-amino acid + H(+). In terms of biological role, an aminoacyl-tRNA editing enzyme that deacylates mischarged D-aminoacyl-tRNAs. Also deacylates mischarged glycyl-tRNA(Ala), protecting cells against glycine mischarging by AlaRS. Acts via tRNA-based rather than protein-based catalysis; rejects L-amino acids rather than detecting D-amino acids in the active site. By recycling D-aminoacyl-tRNA to D-amino acids and free tRNA molecules, this enzyme counteracts the toxicity associated with the formation of D-aminoacyl-tRNA entities in vivo and helps enforce protein L-homochirality. This Pasteurella multocida (strain Pm70) protein is D-aminoacyl-tRNA deacylase.